The following is a 643-amino-acid chain: tRNA 5-methylaminomethyl-2-thiouridine biosynthesis bifunctional protein MnmC (643 aa).

Residues 1 to 223 (MPDRLVSATL…VDDRLVGDYA (223 aa)) form a tRNA (mnm(5)s(2)U34)-methyltransferase region. The tract at residues 247–643 (IGAGLAGCAV…LRARRVGSAG (397 aa)) is FAD-dependent cmnm(5)s(2)U34 oxidoreductase.

It in the N-terminal section; belongs to the methyltransferase superfamily. tRNA (mnm(5)s(2)U34)-methyltransferase family. This sequence in the C-terminal section; belongs to the DAO family. It depends on FAD as a cofactor.

It localises to the cytoplasm. It catalyses the reaction 5-aminomethyl-2-thiouridine(34) in tRNA + S-adenosyl-L-methionine = 5-methylaminomethyl-2-thiouridine(34) in tRNA + S-adenosyl-L-homocysteine + H(+). Catalyzes the last two steps in the biosynthesis of 5-methylaminomethyl-2-thiouridine (mnm(5)s(2)U) at the wobble position (U34) in tRNA. Catalyzes the FAD-dependent demodification of cmnm(5)s(2)U34 to nm(5)s(2)U34, followed by the transfer of a methyl group from S-adenosyl-L-methionine to nm(5)s(2)U34, to form mnm(5)s(2)U34. This Burkholderia cenocepacia (strain HI2424) protein is tRNA 5-methylaminomethyl-2-thiouridine biosynthesis bifunctional protein MnmC.